We begin with the raw amino-acid sequence, 967 residues long: Mediator of RNA polymerase II transcription subunit 14 (967 aa).

This sequence belongs to the Mediator complex subunit 14 family. As to quaternary structure, component of the Mediator complex.

It localises to the nucleus. Component of the Mediator complex, a coactivator involved in the regulated transcription of nearly all RNA polymerase II-dependent genes. Mediator functions as a bridge to convey information from gene-specific regulatory proteins to the basal RNA polymerase II transcription machinery. Mediator is recruited to promoters by direct interactions with regulatory proteins and serves as a scaffold for the assembly of a functional preinitiation complex with RNA polymerase II and the general transcription factors. The sequence is that of Mediator of RNA polymerase II transcription subunit 14 (RGR1) from Eremothecium gossypii (strain ATCC 10895 / CBS 109.51 / FGSC 9923 / NRRL Y-1056) (Yeast).